The following is a 187-amino-acid chain: Photosystem I assembly protein Ycf4 (187 aa).

Helical transmembrane passes span 25–47 (YWWA…SSYL) and 62–84 (FVPQ…IYLW).

It belongs to the Ycf4 family.

It localises to the plastid. It is found in the chloroplast thylakoid membrane. In terms of biological role, seems to be required for the assembly of the photosystem I complex. In Mesostigma viride (Green alga), this protein is Photosystem I assembly protein Ycf4.